Here is an 864-residue protein sequence, read N- to C-terminus: MLGNLKKIFDKNEIEIRKARKIVERINQLDEKARKTSFEEMKSYILQYKGKLENIEELDEHLEQVFAYVRETARRTVGMRHFDVQLIGGIVLHKGKIAEMKTGEGKTLVATAPIVLNSLMNRNIHVVTVNDYLAKRDAMWMGPIYLALGLRVGIINTTGKAYEVVWKNPELAEKGLKENYCVWPDDYDGEFLSDEMKVKKAVEAFEVDIIEVSKKEAYRCDVTYGTNSEFGFDYLRDNLVVSLDDKVQMGHFYAIVDEVDSILIDEARTPLIISGPSKNNASVYKHFYQIAKRLEKDKHFKVDEEHRTVLLTDEGIEYLEKLLGVDNLYDPANVNSIYHITNSLKAIHLFKKDVDYIVHNGQVLIVDEFTGRVLPGRRYSGGLHQAIEAKEGVPIKEESITYATITYQNYFRMYEKLAGMTGTAKTEEQEFKAIYGMDVVVIPTHKPMIRIDHDDLIYRSVEEKYKAIVEEIKKRHEKGQPVLVGTTSIEKSEKLSEMLKKEGIPHQVLNAKYHEKEAQIVAQAGQKGMVTIATNMAGRGTDIKLGPGVKELGGLLIIGTERHESRRIDNQLRGRSGRQGDPGESIFFLSVEDDLMRIFGGDRIQKVMDMVKIEPGQPIYHPLLTKLIEQVQKKVEGINFSVRKYLLELDSVLDTQRRAIYGYRDNILERDVDDFISEAIDNFVEARIEEFCSGVEWDWEGLKNSFAVIKDFVKIDTKIDDKEKLKQDIIEQITKAYRLKKEEFGEDFEHVAKFIVLRIIDENWRQYLEEVEHVKESIRLRSYGQKDPVLEFKKETYDMFNDMMMRTYELSVSYLLNLRRVDNKAEEESKKELAKVSTVHDEFRLIAEESKDSDKKKPKLKIKR.

Residues Q85, 103-107, and D542 each bind ATP; that span reads GEGKT.

The protein belongs to the SecA family. Monomer and homodimer. Part of the essential Sec protein translocation apparatus which comprises SecA, SecYEG and auxiliary proteins SecDF. Other proteins may also be involved.

Its subcellular location is the cell inner membrane. The protein resides in the cytoplasm. The catalysed reaction is ATP + H2O + cellular proteinSide 1 = ADP + phosphate + cellular proteinSide 2.. In terms of biological role, part of the Sec protein translocase complex. Interacts with the SecYEG preprotein conducting channel. Has a central role in coupling the hydrolysis of ATP to the transfer of proteins into and across the cell membrane, serving as an ATP-driven molecular motor driving the stepwise translocation of polypeptide chains across the membrane. In Fervidobacterium nodosum (strain ATCC 35602 / DSM 5306 / Rt17-B1), this protein is Protein translocase subunit SecA.